Here is a 141-residue protein sequence, read N- to C-terminus: MQLTNFTDYGLRALIYMASLPEGRMTSISEVTDVYGVSRNHMVKIINQLSRAGYVTAVRGKNGGIRLGKPASAIRIGDVVRELEPLSLVNCSSEFCHITPACRLKQALSKAVQSFLTELDNYTLADLVEENQPLYKLLLVE.

The 128-residue stretch at 2–129 (QLTNFTDYGL…DNYTLADLVE (128 aa)) folds into the HTH rrf2-type domain. The H-T-H motif DNA-binding region spans 28–51 (ISEVTDVYGVSRNHMVKIINQLSR). The [2Fe-2S] cluster site is built by Cys-91, Cys-96, and Cys-102.

[2Fe-2S] cluster serves as cofactor.

In terms of biological role, nitric oxide-sensitive repressor of genes involved in protecting the cell against nitrosative stress. May require iron for activity. This chain is HTH-type transcriptional repressor NsrR, found in Shigella boydii serotype 18 (strain CDC 3083-94 / BS512).